The chain runs to 415 residues: MDPEGFTSGLFRWNPTRVMVQAPTPIPPPQQQSPATPQTAAFGMRLGGLEGLFGPYGVRFYTAAKIAELGFTASTLVGMKDEELEDMMNSLSHIFRWELLVGERYGIKAAVRAERRRLQEEEEEESSRRRHLLLSAAGDSGTHLALDALSQEDDWTGLSQEPVQHQDQTDAAGINGGGRGGYWEAGQTTIKKQQQRRRKKRLYVSETDDDGNEGEDDDGMDIVNGSGVGMERQREHPFIVTEPGEVARGKKNGLDYLFHLYEQCREFLLQVQTIAKDRGEKCPTKVTNQVFRYAKKSGANYINKPKMRHYVHCYALHCLDEEASNALRSAFKVRGENVGSWRQACYKPLVDIACRHGWDIDAVFNAHPRLSIWYVPTKLRQLCHLERNNAEAAAATLVGGISCRDRLRLDALGFN.

The disordered stretch occupies residues 159–221 (SQEPVQHQDQ…NEGEDDDGMD (63 aa)). The segment covering 174 to 183 (INGGGRGGYW) has biased composition (gly residues). The segment covering 193-202 (QQQRRRKKRL) has biased composition (basic residues). Positions 206–220 (ETDDDGNEGEDDDGM) are enriched in acidic residues. 3 consecutive DNA-binding regions follow at residues 234–238 (REHPF), 303–310 (NKPKMRHY), and 374–377 (YVPT).

Belongs to the FLO/LFY family. In terms of tissue distribution, acts in the floral primordia.

Its subcellular location is the nucleus. In terms of biological role, controls floral meristem identity. Is required very early in flower development and may act here as a transcription factor. The chain is Putative transcription factor BOFH from Brassica oleracea var. botrytis (Cauliflower).